The following is a 515-amino-acid chain: Pisatin demethylase (515 aa).

C453 provides a ligand contact to heme.

Belongs to the cytochrome P450 family. Heme is required as a cofactor.

Its function is as follows. Can detoxify the phytoalexin pisatin from garden pea. Pisatin is an antimicrobial compound produced by pea in response to infection by plant pathogens. The chain is Pisatin demethylase (PDAT9) from Fusarium vanettenii (Neocosmospora pisi).